The chain runs to 146 residues: Meiotically up-regulated gene 96 protein (146 aa).

A helical transmembrane segment spans residues 85–104; sequence LIRYSLILTCLVAILLSVLW.

It localises to the cytoplasm. Its subcellular location is the membrane. Has a role in meiosis. The sequence is that of Meiotically up-regulated gene 96 protein (mug96) from Schizosaccharomyces pombe (strain 972 / ATCC 24843) (Fission yeast).